The chain runs to 350 residues: Transcription factor MYB102 (350 aa).

HTH myb-type domains lie at Lys9–Ile65 and Lys66–Leu116. DNA-binding regions (H-T-H motif) lie at residues Trp37 to Leu61 and Trp89 to Ile112.

Expressed in rosette leaves, cauline leaves and flowers.

Its subcellular location is the nucleus. Probable transcription factor that may function in osmotic stress and wounding signaling pathways. Contributes to basal resistance against the herbivore Pieris rapae (white cabbage butterfly) feeding. This Arabidopsis thaliana (Mouse-ear cress) protein is Transcription factor MYB102.